Here is a 100-residue protein sequence, read N- to C-terminus: Putative sodium channel toxin Ts26 (100 aa).

The signal sequence occupies residues 1–22; that stretch reads MVKSAMKIVILILFVLLIRVES. An LCN-type CS-alpha/beta domain is found at 24-92; it reads RNGYPDISDG…VMDTTIEYCE (69 aa). Cystine bridges form between cysteine 38-cysteine 64, cysteine 50-cysteine 69, cysteine 54-cysteine 71, and cysteine 65-cysteine 91.

Belongs to the long (4 C-C) scorpion toxin superfamily. Sodium channel inhibitor family. In terms of tissue distribution, expressed by the venom gland.

Its subcellular location is the secreted. Putative sodium channel toxin. This chain is Putative sodium channel toxin Ts26, found in Tityus serrulatus (Brazilian scorpion).